A 547-amino-acid polypeptide reads, in one-letter code: MAADEARSVSRLHSEEDMHGKHHSTLWGDFFLHHVPCRPGQYSIMKDNVKIMKEEVKKMLLDVGSSDLSHKLECIDTLERLGLDYHYTKEIDELMCNVFEARDQDLDLTTTSQLFYLLRKHGYHVSSDVFLKFGDDKGDIVTDDARCLLRMYEAAHVRVNGEEILDNILIHTKRQLQCIVDDLEPTLQEEVRYALETPLFRRLNRVQARQFISTYEKSTTRNNMLLEFSKLDFNILLTLYCEELKDLTMWWKEFQAQANTAIYARDRMVEMHFWMMGVFFEPQYSYSRKMLTQLFMIVSVLDDLYDSHCTTEEGNAFTAALQRWDEEGVEQCPTYLRTLYTNIRATVKAIEEDLNLQNNKHAKLVKGLIIDMAMCYNAETEWRDKKYVPATVDEHLKISARSSGCMHLVSQGFISMGDVATSEALEWASTYPKIVRAVCIIARLANDIMSYKREASNNTMVSTVQTCAKEYGTTTVEQAIEKIRELIEEAWMDITHECLRQPQPMALLERAVNLARTMDFLYKDVDGYTDSRSIKGILDSLYVDIID.

Mg(2+)-binding residues include Asp302 and Asp306. Residues Asp302, Asp306, Arg443, and Asn446 each coordinate substrate. Positions 302–306 (DDLYD) match the DDXXD motif motif. 2 residues coordinate Mg(2+): Asn446 and Glu454.

Belongs to the terpene synthase family. Monomer. Requires Mg(2+) as cofactor. Mn(2+) serves as cofactor.

The protein resides in the cytoplasm. The catalysed reaction is (2E,6E)-farnesyl diphosphate = (-)-(E)-beta-caryophyllene + diphosphate. It functions in the pathway secondary metabolite biosynthesis; terpenoid biosynthesis. Component of the volatile terpenes biosynthesis pathways. Sesquiterpene synthase that converts farnesyl diphosphate to (E)-beta-caryophyllene. Involved in indirect defense by producing volatile signals attracting natural enemies of herbivores. The chain is (E)-beta-caryophyllene synthase from Zea mays (Maize).